Consider the following 139-residue polypeptide: Large-conductance mechanosensitive channel (139 aa).

The next 3 helical transmembrane spans lie at phenylalanine 10 to glycine 30, valine 40 to alanine 60, and leucine 80 to phenylalanine 100.

It belongs to the MscL family. Homopentamer.

It is found in the cell inner membrane. In terms of biological role, channel that opens in response to stretch forces in the membrane lipid bilayer. May participate in the regulation of osmotic pressure changes within the cell. The chain is Large-conductance mechanosensitive channel from Janthinobacterium sp. (strain Marseille) (Minibacterium massiliensis).